A 148-amino-acid chain; its full sequence is Large ribosomal subunit protein uL15 (148 aa).

Residues 1–57 are disordered; that stretch reads MRLNDVKPQKGSKKRRRRVGRGISAGQGASAGLGMRGQKSRSGSGTRPGFEGGQQPL. The segment covering 10 to 20 has biased composition (basic residues); the sequence is KGSKKRRRRVG. Residues 23-35 show a composition bias toward gly residues; sequence ISAGQGASAGLGM.

The protein belongs to the universal ribosomal protein uL15 family. In terms of assembly, part of the 50S ribosomal subunit.

Functionally, binds to the 23S rRNA. The protein is Large ribosomal subunit protein uL15 of Nostoc sp. (strain PCC 7120 / SAG 25.82 / UTEX 2576).